Reading from the N-terminus, the 136-residue chain is Endonuclease II (136 aa).

The region spanning 32-131 (KYNVIYAIAI…IKLFNPPWNI (100 aa)) is the GIY-YIG domain.

As to quaternary structure, homotetramer. The cofactor is Mg(2+).

It carries out the reaction Endonucleolytic nicking and cleavage of cytosine-containing double-stranded DNA.. Its function is as follows. Contributes to the degradation of host DNA, permitting the scavenging of host-derived nucleotides for phage DNA synthesis. Sequence-specific endonuclease. Catalyzes nicking of the bottom strand of double-stranded DNA between the first and second base pair to the right of a top-strand CCGC motif. Does not cleave native phage DNA, which contains 5-hydroxymethylcytosine instead of cytosine. The chain is Endonuclease II (denA) from Escherichia coli (Bacteriophage T4).